The chain runs to 341 residues: Phenylalanine--tRNA ligase alpha subunit (341 aa).

Glu256 contributes to the Mg(2+) binding site.

The protein belongs to the class-II aminoacyl-tRNA synthetase family. Phe-tRNA synthetase alpha subunit type 1 subfamily. In terms of assembly, tetramer of two alpha and two beta subunits. Mg(2+) serves as cofactor.

The protein localises to the cytoplasm. It carries out the reaction tRNA(Phe) + L-phenylalanine + ATP = L-phenylalanyl-tRNA(Phe) + AMP + diphosphate + H(+). The protein is Phenylalanine--tRNA ligase alpha subunit of Clostridium perfringens (strain 13 / Type A).